The chain runs to 185 residues: Ribosome-recycling factor (185 aa).

This sequence belongs to the RRF family.

It is found in the cytoplasm. In terms of biological role, responsible for the release of ribosomes from messenger RNA at the termination of protein biosynthesis. May increase the efficiency of translation by recycling ribosomes from one round of translation to another. This chain is Ribosome-recycling factor, found in Corynebacterium urealyticum (strain ATCC 43042 / DSM 7109).